The following is a 234-amino-acid chain: Probable pectate lyase F (234 aa).

Residues 1 to 17 form the signal peptide; it reads MWSSIAAFPVLVPVALA.

This sequence belongs to the polysaccharide lyase 3 family. Ca(2+) is required as a cofactor.

It localises to the secreted. It catalyses the reaction Eliminative cleavage of (1-&gt;4)-alpha-D-galacturonan to give oligosaccharides with 4-deoxy-alpha-D-galact-4-enuronosyl groups at their non-reducing ends.. Pectinolytic enzyme consist of four classes of enzymes: pectin lyase, polygalacturonase, pectin methylesterase and rhamnogalacturonase. Among pectinolytic enzymes, pectin lyase is the most important in depolymerization of pectin, since it cleaves internal glycosidic bonds of highly methylated pectins. Favors pectate, the anion, over pectin, the methyl ester. The sequence is that of Probable pectate lyase F (plyF) from Aspergillus fumigatus (strain ATCC MYA-4609 / CBS 101355 / FGSC A1100 / Af293) (Neosartorya fumigata).